Reading from the N-terminus, the 547-residue chain is Solute carrier family 22 member 25 (547 aa).

Residues 1-9 (MAFQDLLDQ) lie on the Cytoplasmic side of the membrane. A helical transmembrane segment spans residues 10–30 (VGGLGRFQILQMVFLIMFNVI). Residues 31 to 145 (VYHQTQLENF…DLVCESQPLN (115 aa)) lie on the Extracellular side of the membrane. Residues Asn-56 and Asn-102 are each glycosylated (N-linked (GlcNAc...) asparagine). The chain crosses the membrane as a helical span at residues 146–166 (SVAKFLFMAGMMVGGNLYGHL). Residues 167-177 (SDRFGRKFVLR) are Cytoplasmic-facing. A helical membrane pass occupies residues 178–198 (WSYLQLAIVGTCAAFAPTILV). The Extracellular portion of the chain corresponds to 199 to 204 (YCSLRF). A helical transmembrane segment spans residues 205 to 225 (LAGAATFSIIVNTVLLIVEWI). The Cytoplasmic portion of the chain corresponds to 226-234 (THQFCAMAL). The chain crosses the membrane as a helical span at residues 235 to 255 (TLTLCAASIGHITLGSLAFVI). Residues 256–259 (RDQC) lie on the Extracellular side of the membrane. The helical transmembrane segment at 260–280 (ILQLVMSAPCFVFFLFSRWLA) threads the bilayer. The Cytoplasmic segment spans residues 281-349 (ESARWLIINN…LLRIPNICKR (69 aa)). The helical transmembrane segment at 350 to 370 (ICFLSFVRFASTIPFWGLTLH) threads the bilayer. Over 371-377 (LQHLGNN) the chain is Extracellular. The helical transmembrane segment at 378 to 398 (VFLLQTLFGAVTLLANCVAPW) threads the bilayer. Topologically, residues 399 to 406 (ALNHMSRR) are cytoplasmic. The chain crosses the membrane as a helical span at residues 407–427 (LSQMLLMFLLATCLLAIIFVP). Residues 428 to 434 (QEMQTLR) are Extracellular-facing. A helical membrane pass occupies residues 435 to 455 (VVLATLGVGAASLGITCSTAQ). Over 456–470 (ENELIPSIIRGRATG) the chain is Cytoplasmic. The helical transmembrane segment at 471 to 491 (ITGNFANIGGALASLMMILSI) threads the bilayer. Topologically, residues 492–494 (YSR) are extracellular. Residues 495–515 (PLPWIIYGVFAILSGLVVLLL) form a helical membrane-spanning segment. At 516 to 547 (PETRNQPLLDSIQDVENEGVNSLAAPQRSSVL) the chain is on the cytoplasmic side.

Belongs to the major facilitator (TC 2.A.1) superfamily. Organic cation transporter (TC 2.A.1.19) family. As to expression, expressed exclusively in liver in both embryo and adult.

The protein localises to the membrane. In Homo sapiens (Human), this protein is Solute carrier family 22 member 25.